Here is a 1113-residue protein sequence, read N- to C-terminus: StAR-related lipid transfer protein 13 (1113 aa).

Met1 carries the N-acetylmethionine modification. Residues 55–122 (QQEIEAKEAC…LNKCASMRLD (68 aa)) form the SAM domain. 3 disordered regions span residues 164 to 218 (PVAD…HSAD), 230 to 256 (SSLPQSTREGLNQSFHPKNEKPTRTRA), and 308 to 343 (NGDLQTSPPAACRKGLPCSSKSSGESSPLENSSTVS). Positions 179–188 (NTASSESVLT) are enriched in polar residues. A compositionally biased stretch (low complexity) spans 197-214 (SIHSESSGGSDSRSQSGH). The segment covering 230 to 245 (SSLPQSTREGLNQSFH) has biased composition (polar residues). Residues 322 to 340 (GLPCSSKSSGESSPLENSS) are compositionally biased toward low complexity. Ser411 is subject to Phosphoserine. Polar residues-rich tracts occupy residues 421-435 (SNGVNWRTGSISLGR) and 529-549 (PNQVTLDFEGNSVSEGRTTPS). 2 disordered regions span residues 421–443 (SNGVNWRTGSISLGRQQGPGMRE) and 514–578 (HSTL…GASL). The region spanning 663 to 868 (VPLIVHVQRT…HMITECNRLF (206 aa)) is the Rho-GAP domain. Residues 899–1109 (LAESGATFHT…SFQPLVAEGP (211 aa)) form the START domain.

As to quaternary structure, homodimer. Interacts with TAX1BP1.

The protein localises to the cytoplasm. The protein resides in the membrane. It localises to the mitochondrion membrane. Its subcellular location is the lipid droplet. Functionally, may function as a GTPase-activating protein. The sequence is that of StAR-related lipid transfer protein 13 (Stard13) from Mus musculus (Mouse).